Consider the following 338-residue polypeptide: RNA 3'-terminal phosphate cyclase (338 aa).

ATP contacts are provided by residues glutamine 103 and 283-287 (YLADQ). The active-site Tele-AMP-histidine intermediate is histidine 308.

It belongs to the RNA 3'-terminal cyclase family. Type 1 subfamily.

The protein localises to the cytoplasm. The catalysed reaction is a 3'-end 3'-phospho-ribonucleotide-RNA + ATP = a 3'-end 2',3'-cyclophospho-ribonucleotide-RNA + AMP + diphosphate. Catalyzes the conversion of 3'-phosphate to a 2',3'-cyclic phosphodiester at the end of RNA. The mechanism of action of the enzyme occurs in 3 steps: (A) adenylation of the enzyme by ATP; (B) transfer of adenylate to an RNA-N3'P to produce RNA-N3'PP5'A; (C) and attack of the adjacent 2'-hydroxyl on the 3'-phosphorus in the diester linkage to produce the cyclic end product. The biological role of this enzyme is unknown but it is likely to function in some aspects of cellular RNA processing. This Shigella boydii serotype 18 (strain CDC 3083-94 / BS512) protein is RNA 3'-terminal phosphate cyclase.